Here is a 95-residue protein sequence, read N- to C-terminus: Large ribosomal subunit protein bL28 (95 aa).

Residues 1-28 are disordered; the sequence is MARKRTLGGKAPQAGNKVSHSQRKTRRQ.

It belongs to the bacterial ribosomal protein bL28 family.

The protein is Large ribosomal subunit protein bL28 of Magnetococcus marinus (strain ATCC BAA-1437 / JCM 17883 / MC-1).